Here is a 230-residue protein sequence, read N- to C-terminus: Small ribosomal subunit protein uS3 (230 aa).

A KH type-2 domain is found at valine 39–arginine 107.

This sequence belongs to the universal ribosomal protein uS3 family. In terms of assembly, part of the 30S ribosomal subunit. Forms a tight complex with proteins S10 and S14.

Functionally, binds the lower part of the 30S subunit head. Binds mRNA in the 70S ribosome, positioning it for translation. This chain is Small ribosomal subunit protein uS3, found in Shewanella baltica (strain OS223).